A 349-amino-acid polypeptide reads, in one-letter code: Protein DMR6-LIKE OXYGENASE 1 (349 aa).

Residues 197–296 enclose the Fe2OG dioxygenase domain; that stretch reads HAQHMAFNYY…RLSIPTFYFP (100 aa). Y206 contacts 2-oxoglutarate. Fe cation-binding residues include H221, D223, and H277. Residues R287 and S289 each contribute to the 2-oxoglutarate site.

It belongs to the iron/ascorbate-dependent oxidoreductase family. The cofactor is L-ascorbate. Requires Fe(2+) as cofactor.

It carries out the reaction salicylate + NADH + O2 + H(+) = 2,3-dihydroxybenzoate + NAD(+) + H2O. Its function is as follows. Converts salicylic acid (SA) to both 2,3-dihydroxybenzoic acid (2,3-DHBA) and 2,5-DHBA in vitro but only 2,3-DHBA in vivo. Component of a negative feedback regulation system of SA levels during senescence. Regulates both onset and progression of leaf senescence. Negative regulator of defense against Hyaloperonospora arabidopsidis. In terms of biological role, (Microbial infection) Confers susceptibility to the downy mildew pathogen Hyaloperonospora arabidopsidis. This chain is Protein DMR6-LIKE OXYGENASE 1, found in Arabidopsis thaliana (Mouse-ear cress).